We begin with the raw amino-acid sequence, 126 residues long: Histone H2B type F-S (126 aa).

A compositionally biased stretch (low complexity) spans 1-12; sequence MPEPAKSAPAPK. A disordered region spans residues 1 to 36; sequence MPEPAKSAPAPKKGSKKAVTKAQKKDGRKRKRSRKE. Pro-2 bears the N-acetylproline mark. ADP-ribosyl glutamic acid is present on Glu-3. Residue Lys-6 is modified to N6-(2-hydroxyisobutyryl)lysine; alternate. At Lys-6 the chain carries N6-(beta-hydroxybutyryl)lysine; alternate. Residue Lys-6 is modified to N6-acetyllysine; alternate. N6-butyryllysine; alternate is present on Lys-6. Position 6 is an N6-crotonyllysine; alternate (Lys-6). N6-lactoyllysine; alternate is present on Lys-6. A Glycyl lysine isopeptide (Lys-Gly) (interchain with G-Cter in SUMO2); alternate cross-link involves residue Lys-6. Residue Ser-7 is modified to ADP-ribosylserine. An N6-(beta-hydroxybutyryl)lysine; alternate modification is found at Lys-12. 2 positions are modified to N6-acetyllysine; alternate: Lys-12 and Lys-13. Residues Lys-12 and Lys-13 each carry the N6-crotonyllysine; alternate modification. Position 12 is an N6-lactoyllysine; alternate (Lys-12). At Lys-13 the chain carries N6-(2-hydroxyisobutyryl)lysine; alternate. Ser-15 carries the post-translational modification Phosphoserine; by STK4/MST1. N6-acetyllysine; alternate occurs at positions 16, 17, 21, and 24. 4 positions are modified to N6-crotonyllysine; alternate: Lys-16, Lys-17, Lys-21, and Lys-24. N6-lactoyllysine; alternate is present on residues Lys-16, Lys-17, Lys-21, and Lys-24. N6-(beta-hydroxybutyryl)lysine; alternate is present on residues Lys-17 and Lys-21. At Lys-17 the chain carries N6-glutaryllysine; alternate. 2 positions are modified to N6-(2-hydroxyisobutyryl)lysine; alternate: Lys-21 and Lys-24. At Lys-21 the chain carries N6-butyryllysine; alternate. Residue Lys-21 forms a Glycyl lysine isopeptide (Lys-Gly) (interchain with G-Cter in SUMO2); alternate linkage. Lys-25 is modified (N6-(2-hydroxyisobutyryl)lysine). The residue at position 35 (Lys-35) is an N6-(2-hydroxyisobutyryl)lysine; alternate. Lys-35 is subject to N6-(beta-hydroxybutyryl)lysine; alternate. Lys-35 carries the N6-crotonyllysine; alternate modification. Position 35 is an N6-glutaryllysine; alternate (Lys-35). Position 35 is an N6-succinyllysine; alternate (Lys-35). Residue Lys-35 forms a Glycyl lysine isopeptide (Lys-Gly) (interchain with G-Cter in ubiquitin); alternate linkage. Residue Glu-36 is modified to PolyADP-ribosyl glutamic acid. Ser-37 carries the phosphoserine; by AMPK modification. Lys-44, Lys-47, and Lys-58 each carry N6-(2-hydroxyisobutyryl)lysine; alternate. Position 44 is an N6-lactoyllysine; alternate (Lys-44). Lys-44 and Lys-47 each carry N6-glutaryllysine; alternate. Lys-47 is subject to N6-methyllysine; alternate. Lys-58 is modified (N6,N6-dimethyllysine; alternate). Arg-80 carries the dimethylated arginine modification. Lys-86 carries the post-translational modification N6-(2-hydroxyisobutyryl)lysine; alternate. An N6-(beta-hydroxybutyryl)lysine; alternate modification is found at Lys-86. Lys-86 carries the post-translational modification N6-acetyllysine; alternate. At Lys-86 the chain carries N6-lactoyllysine; alternate. Lys-86 carries the N6,N6,N6-trimethyllysine; alternate modification. Arg-87 and Arg-93 each carry omega-N-methylarginine. The residue at position 109 (Lys-109) is an N6-(2-hydroxyisobutyryl)lysine; alternate. The residue at position 109 (Lys-109) is an N6-lactoyllysine; alternate. Lys-109 is subject to N6-glutaryllysine; alternate. Lys-109 is subject to N6-methyllysine; alternate. Ser-113 carries an O-linked (GlcNAc) serine glycan. Phosphothreonine is present on Thr-116. N6-(2-hydroxyisobutyryl)lysine; alternate is present on residues Lys-117 and Lys-121. Residues Lys-117 and Lys-121 each carry the N6-(beta-hydroxybutyryl)lysine; alternate modification. Lys-117 and Lys-121 each carry N6-lactoyllysine; alternate. Lys-117 and Lys-121 each carry N6-glutaryllysine; alternate. N6-succinyllysine; alternate occurs at positions 117 and 121. Lys-117 bears the N6-malonyllysine; alternate mark. Lys-117 carries the post-translational modification N6-methylated lysine; alternate. Lys-121 is covalently cross-linked (Glycyl lysine isopeptide (Lys-Gly) (interchain with G-Cter in ubiquitin); alternate).

This sequence belongs to the histone H2B family. The nucleosome is a histone octamer containing two molecules each of H2A, H2B, H3 and H4 assembled in one H3-H4 heterotetramer and two H2A-H2B heterodimers. The octamer wraps approximately 147 bp of DNA. Post-translationally, monoubiquitination at Lys-35 (H2BK34Ub) by the MSL1/MSL2 dimer is required for histone H3 'Lys-4' (H3K4me) and 'Lys-79' (H3K79me) methylation and transcription activation at specific gene loci, such as HOXA9 and MEIS1 loci. Similarly, monoubiquitination at Lys-121 (H2BK120Ub) by the RNF20/40 complex gives a specific tag for epigenetic transcriptional activation and is also prerequisite for histone H3 'Lys-4' and 'Lys-79' methylation. It also functions cooperatively with the FACT dimer to stimulate elongation by RNA polymerase II. H2BK120Ub also acts as a regulator of mRNA splicing: deubiquitination by USP49 is required for efficient cotranscriptional splicing of a large set of exons. In terms of processing, phosphorylation at Ser-37 (H2BS36ph) by AMPK in response to stress promotes transcription. Phosphorylated on Ser-15 (H2BS14ph) by STK4/MST1 during apoptosis; which facilitates apoptotic chromatin condensation. Also phosphorylated on Ser-15 in response to DNA double strand breaks (DSBs), and in correlation with somatic hypermutation and immunoglobulin class-switch recombination. GlcNAcylation at Ser-113 promotes monoubiquitination of Lys-121. It fluctuates in response to extracellular glucose, and associates with transcribed genes. Post-translationally, ADP-ribosylated by PARP1 or PARP2 on Ser-7 (H2BS6ADPr) in response to DNA damage. H2BS6ADPr promotes recruitment of CHD1L. Mono-ADP-ribosylated on Glu-3 (H2BE2ADPr) by PARP3 in response to single-strand breaks. Poly ADP-ribosylation on Glu-36 (H2BE35ADPr) by PARP1 regulates adipogenesis: it inhibits phosphorylation at Ser-37 (H2BS36ph), thereby blocking expression of pro-adipogenetic genes. In terms of processing, crotonylation (Kcr) is specifically present in male germ cells and marks testis-specific genes in post-meiotic cells, including X-linked genes that escape sex chromosome inactivation in haploid cells. Crotonylation marks active promoters and enhancers and confers resistance to transcriptional repressors. It is also associated with post-meiotically activated genes on autosomes. Lactylated in macrophages by EP300/P300 by using lactoyl-CoA directly derived from endogenous or exogenous lactate, leading to stimulates gene transcription.

It is found in the nucleus. The protein localises to the chromosome. Functionally, core component of nucleosome. Nucleosomes wrap and compact DNA into chromatin, limiting DNA accessibility to the cellular machineries which require DNA as a template. Histones thereby play a central role in transcription regulation, DNA repair, DNA replication and chromosomal stability. DNA accessibility is regulated via a complex set of post-translational modifications of histones, also called histone code, and nucleosome remodeling. Its function is as follows. Has broad antibacterial activity. May contribute to the formation of the functional antimicrobial barrier of the colonic epithelium, and to the bactericidal activity of amniotic fluid. The protein is Histone H2B type F-S of Homo sapiens (Human).